The following is a 387-amino-acid chain: AIAAVITFLILFTIFGNALVILAVLTSRSLRAPQNLFLVSLAAADILVATLIIPFSLANELLGYWYFRHTWCXVYLALDVLFCTSSIVHLCAISLDRYWAVSRALEYNSKRTPRRIKCIILTVWLIAAAISLPPLIYKGDQDPQPRGRPQCKLNQEAWYILSSSIGSFFVPCLIMILVYLRIYLIAKRSSSRRKPRAKGXPREGESKQPQLRPVGTSVSARPPALTSPLAVTGEANGHSKPTGERETPEDLVSPASPPSWPAIPNSGQGRKEGVCGTSPEEEAEEEEECGPEAVPASPALACSPSLQPPQGSRVLATLRGQVLLGRGVGTARGQWWRRRAQLTREKRFTFVLAVVIGVFVLCWFPFFFSYSLGAICPQHCKVPHGLF.

Residues 1–25 (AIAAVITFLILFTIFGNALVILAVL) traverse the membrane as a helical segment. Residues 26 to 36 (TSRSLRAPQNL) are Cytoplasmic-facing. Residues 37-62 (FLVSLAAADILVATLIIPFSLANELL) form a helical membrane-spanning segment. The Extracellular segment spans residues 63-72 (GYWYFRHTWC). The cysteines at positions 72 and 151 are disulfide-linked. A helical transmembrane segment spans residues 73–95 (XVYLALDVLFCTSSIVHLCAISL). At 96-117 (DRYWAVSRALEYNSKRTPRRIK) the chain is on the cytoplasmic side. A helical membrane pass occupies residues 118–140 (CIILTVWLIAAAISLPPLIYKGD). The Extracellular portion of the chain corresponds to 141–156 (QDPQPRGRPQCKLNQE). The helical transmembrane segment at 157–180 (AWYILSSSIGSFFVPCLIMILVYL) threads the bilayer. Residues 181–351 (RIYLIAKRSS…LTREKRFTFV (171 aa)) lie on the Cytoplasmic side of the membrane. The segment at 193–303 (RKPRAKGXPR…VPASPALACS (111 aa)) is disordered. The segment covering 279–290 (PEEEAEEEEECG) has biased composition (acidic residues). A helical transmembrane segment spans residues 352 to 375 (LAVVIGVFVLCWFPFFFSYSLGAI). The Extracellular portion of the chain corresponds to 376 to 384 (CPQHCKVPH). Residues 385 to 387 (GLF) traverse the membrane as a helical segment.

It belongs to the G-protein coupled receptor 1 family. Adrenergic receptor subfamily. ADRA2B sub-subfamily. In terms of assembly, interacts with RAB26. Interacts with PPP1R9B. Interacts with GGA1, GGA2 and GGA3.

It is found in the cell membrane. Alpha-2 adrenergic receptors mediate the catecholamine-induced inhibition of adenylate cyclase through the action of G proteins. The protein is Alpha-2B adrenergic receptor (ADRA2B) of Macroscelides proboscideus (Short-eared elephant shrew).